A 307-amino-acid polypeptide reads, in one-letter code: Aspartate carbamoyltransferase catalytic subunit (307 aa).

Arg54 and Thr55 together coordinate carbamoyl phosphate. L-aspartate is bound at residue Lys83. Carbamoyl phosphate contacts are provided by Arg104, His132, and Gln135. Positions 165 and 228 each coordinate L-aspartate. 2 residues coordinate carbamoyl phosphate: Leu267 and Pro268.

The protein belongs to the aspartate/ornithine carbamoyltransferase superfamily. ATCase family. Heterododecamer (2C3:3R2) of six catalytic PyrB chains organized as two trimers (C3), and six regulatory PyrI chains organized as three dimers (R2).

It catalyses the reaction carbamoyl phosphate + L-aspartate = N-carbamoyl-L-aspartate + phosphate + H(+). It participates in pyrimidine metabolism; UMP biosynthesis via de novo pathway; (S)-dihydroorotate from bicarbonate: step 2/3. Its function is as follows. Catalyzes the condensation of carbamoyl phosphate and aspartate to form carbamoyl aspartate and inorganic phosphate, the committed step in the de novo pyrimidine nucleotide biosynthesis pathway. This Clostridium perfringens (strain ATCC 13124 / DSM 756 / JCM 1290 / NCIMB 6125 / NCTC 8237 / Type A) protein is Aspartate carbamoyltransferase catalytic subunit.